Reading from the N-terminus, the 252-residue chain is 2-succinyl-6-hydroxy-2,4-cyclohexadiene-1-carboxylate synthase (252 aa).

It belongs to the AB hydrolase superfamily. MenH family. In terms of assembly, monomer.

It carries out the reaction 5-enolpyruvoyl-6-hydroxy-2-succinyl-cyclohex-3-ene-1-carboxylate = (1R,6R)-6-hydroxy-2-succinyl-cyclohexa-2,4-diene-1-carboxylate + pyruvate. Its pathway is quinol/quinone metabolism; 1,4-dihydroxy-2-naphthoate biosynthesis; 1,4-dihydroxy-2-naphthoate from chorismate: step 3/7. It functions in the pathway quinol/quinone metabolism; menaquinone biosynthesis. Its function is as follows. Catalyzes a proton abstraction reaction that results in 2,5-elimination of pyruvate from 2-succinyl-5-enolpyruvyl-6-hydroxy-3-cyclohexene-1-carboxylate (SEPHCHC) and the formation of 2-succinyl-6-hydroxy-2,4-cyclohexadiene-1-carboxylate (SHCHC). The polypeptide is 2-succinyl-6-hydroxy-2,4-cyclohexadiene-1-carboxylate synthase (Shigella boydii serotype 4 (strain Sb227)).